A 428-amino-acid polypeptide reads, in one-letter code: 3-phosphoshikimate 1-carboxyvinyltransferase (428 aa).

3-phosphoshikimate is bound by residues K20, S21, and R25. Position 20 (K20) interacts with phosphoenolpyruvate. Positions 92 and 120 each coordinate phosphoenolpyruvate. 3-phosphoshikimate contacts are provided by S166, Q168, D314, and K341. Q168 contacts phosphoenolpyruvate. Residue D314 is the Proton acceptor of the active site. Residues R345 and R387 each coordinate phosphoenolpyruvate.

Belongs to the EPSP synthase family. As to quaternary structure, monomer.

It localises to the cytoplasm. It carries out the reaction 3-phosphoshikimate + phosphoenolpyruvate = 5-O-(1-carboxyvinyl)-3-phosphoshikimate + phosphate. It participates in metabolic intermediate biosynthesis; chorismate biosynthesis; chorismate from D-erythrose 4-phosphate and phosphoenolpyruvate: step 6/7. Functionally, catalyzes the transfer of the enolpyruvyl moiety of phosphoenolpyruvate (PEP) to the 5-hydroxyl of shikimate-3-phosphate (S3P) to produce enolpyruvyl shikimate-3-phosphate and inorganic phosphate. This is 3-phosphoshikimate 1-carboxyvinyltransferase from Listeria monocytogenes serotype 4b (strain CLIP80459).